Reading from the N-terminus, the 250-residue chain is Cyclopentanol dehydrogenase (250 aa).

NAD(+) is bound by residues methionine 18, aspartate 37, aspartate 63, valine 64, asparagine 90, tyrosine 155, lysine 159, isoleucine 188, threonine 190, and threonine 193. Residue tyrosine 155 is the Proton acceptor of the active site.

It belongs to the short-chain dehydrogenases/reductases (SDR) family.

The catalysed reaction is cyclopentanol + NAD(+) = cyclopentanone + NADH + H(+). The enzyme catalyses cyclohexanol + NAD(+) = cyclohexanone + NADH + H(+). Its pathway is alcohol metabolism; cyclopentanol degradation; 5-valerolactone from cyclopentanol: step 1/2. Catalyzes the oxidation of cyclopentanol to cyclopentanone and cyclohexanol to cyclohexanone. The activity toward cyclohexanol is 60% that of cyclopentanol. This is Cyclopentanol dehydrogenase from Comamonas sp. (strain NCIMB 9872).